The chain runs to 754 residues: 5-methyltetrahydropteroyltriglutamate--homocysteine methyltransferase (754 aa).

Residues 15–18 (RELK) and lysine 114 contribute to the 5-methyltetrahydropteroyltri-L-glutamate site. Residues 430 to 432 (IGS) and glutamate 483 contribute to the L-homocysteine site. L-methionine is bound by residues 430–432 (IGS) and glutamate 483. Residues 514 to 515 (RC) and tryptophan 560 contribute to the 5-methyltetrahydropteroyltri-L-glutamate site. An L-homocysteine-binding site is contributed by aspartate 598. Aspartate 598 lines the L-methionine pocket. Glutamate 604 lines the 5-methyltetrahydropteroyltri-L-glutamate pocket. Zn(2+)-binding residues include histidine 641, cysteine 643, and glutamate 665. Catalysis depends on histidine 694, which acts as the Proton donor. Cysteine 726 provides a ligand contact to Zn(2+).

It belongs to the vitamin-B12 independent methionine synthase family. Zn(2+) serves as cofactor.

It carries out the reaction 5-methyltetrahydropteroyltri-L-glutamate + L-homocysteine = tetrahydropteroyltri-L-glutamate + L-methionine. It functions in the pathway amino-acid biosynthesis; L-methionine biosynthesis via de novo pathway; L-methionine from L-homocysteine (MetE route): step 1/1. In terms of biological role, catalyzes the transfer of a methyl group from 5-methyltetrahydrofolate to homocysteine resulting in methionine formation. The chain is 5-methyltetrahydropteroyltriglutamate--homocysteine methyltransferase from Campylobacter jejuni subsp. jejuni serotype O:2 (strain ATCC 700819 / NCTC 11168).